The primary structure comprises 236 residues: Large ribosomal subunit protein uL3 (236 aa).

It belongs to the universal ribosomal protein uL3 family. Part of the 50S ribosomal subunit. Forms a cluster with proteins L14 and L19.

Its function is as follows. One of the primary rRNA binding proteins, it binds directly near the 3'-end of the 23S rRNA, where it nucleates assembly of the 50S subunit. This Anaeromyxobacter dehalogenans (strain 2CP-C) protein is Large ribosomal subunit protein uL3.